A 190-amino-acid chain; its full sequence is Bifunctional protein PyrR (190 aa).

Positions 112 to 124 (VILVDDVLYSGRS) match the PRPP-binding motif.

Belongs to the purine/pyrimidine phosphoribosyltransferase family. PyrR subfamily.

The catalysed reaction is UMP + diphosphate = 5-phospho-alpha-D-ribose 1-diphosphate + uracil. Functionally, regulates the transcription of the pyrimidine nucleotide (pyr) operon in response to exogenous pyrimidines. In terms of biological role, also displays a weak uracil phosphoribosyltransferase activity which is not physiologically significant. This chain is Bifunctional protein PyrR, found in Mycolicibacterium paratuberculosis (strain ATCC BAA-968 / K-10) (Mycobacterium paratuberculosis).